Reading from the N-terminus, the 342-residue chain is Dihydroorotate dehydrogenase (quinone) (342 aa).

Residues 65–69 (AGLDK) and threonine 89 each bind FMN. Lysine 69 lines the substrate pocket. 114 to 118 (NRMGF) contacts substrate. The FMN site is built by asparagine 142 and asparagine 175. Substrate is bound at residue asparagine 175. Serine 178 serves as the catalytic Nucleophile. Asparagine 180 lines the substrate pocket. FMN is bound by residues lysine 220 and threonine 248. 249–250 (NT) serves as a coordination point for substrate. FMN-binding positions include glycine 271, glycine 300, and 321–322 (YT).

The protein belongs to the dihydroorotate dehydrogenase family. Type 2 subfamily. In terms of assembly, monomer. FMN is required as a cofactor.

It localises to the cell membrane. It catalyses the reaction (S)-dihydroorotate + a quinone = orotate + a quinol. It participates in pyrimidine metabolism; UMP biosynthesis via de novo pathway; orotate from (S)-dihydroorotate (quinone route): step 1/1. Its function is as follows. Catalyzes the conversion of dihydroorotate to orotate with quinone as electron acceptor. This is Dihydroorotate dehydrogenase (quinone) from Burkholderia pseudomallei (strain 668).